The chain runs to 122 residues: Protein SPIRAL1-like 3 (122 aa).

Disordered regions lie at residues 1–78 and 96–122; these read MGKA…NNYF and KVHA…SGNK. Positions 32–61 are enriched in low complexity; sequence TMGTTTTTTTTTTTDGTGGRPITTTTTTVT. The residue at position 73 (Ser-73) is a Phosphoserine.

This sequence belongs to the SPIRAL1 family. Ubiquitous. Preferentially expressed in above-ground organs.

In terms of biological role, acts redundantly with SPR1 in maintaining the cortical microtubules organization essential for anisotropic cell growth. The sequence is that of Protein SPIRAL1-like 3 (SP1L3) from Arabidopsis thaliana (Mouse-ear cress).